A 281-amino-acid chain; its full sequence is Small ribosomal subunit protein uS2 (281 aa).

Residues 225–281 (LMERKAEKPEEEETEEAAPRRERRARSGARRSRQNENEATAEAATEVAEAPEAEEAE) form a disordered region. The segment covering 245-256 (RERRARSGARRS) has biased composition (basic residues). Over residues 262–272 (EATAEAATEVA) the composition is skewed to low complexity.

Belongs to the universal ribosomal protein uS2 family.

This is Small ribosomal subunit protein uS2 from Porphyromonas gingivalis (strain ATCC 33277 / DSM 20709 / CIP 103683 / JCM 12257 / NCTC 11834 / 2561).